Reading from the N-terminus, the 206-residue chain is Urease accessory protein UreG (206 aa).

11-18 (GPVGAGKT) provides a ligand contact to GTP.

This sequence belongs to the SIMIBI class G3E GTPase family. UreG subfamily. Homodimer. UreD, UreF and UreG form a complex that acts as a GTP-hydrolysis-dependent molecular chaperone, activating the urease apoprotein by helping to assemble the nickel containing metallocenter of UreC. The UreE protein probably delivers the nickel.

The protein resides in the cytoplasm. In terms of biological role, facilitates the functional incorporation of the urease nickel metallocenter. This process requires GTP hydrolysis, probably effectuated by UreG. This Ureaplasma parvum serovar 3 (strain ATCC 700970) protein is Urease accessory protein UreG.